Consider the following 259-residue polypeptide: Imidazole glycerol phosphate synthase subunit HisF (259 aa).

Active-site residues include D11 and D130.

This sequence belongs to the HisA/HisF family. In terms of assembly, heterodimer of HisH and HisF.

It is found in the cytoplasm. The enzyme catalyses 5-[(5-phospho-1-deoxy-D-ribulos-1-ylimino)methylamino]-1-(5-phospho-beta-D-ribosyl)imidazole-4-carboxamide + L-glutamine = D-erythro-1-(imidazol-4-yl)glycerol 3-phosphate + 5-amino-1-(5-phospho-beta-D-ribosyl)imidazole-4-carboxamide + L-glutamate + H(+). The protein operates within amino-acid biosynthesis; L-histidine biosynthesis; L-histidine from 5-phospho-alpha-D-ribose 1-diphosphate: step 5/9. In terms of biological role, IGPS catalyzes the conversion of PRFAR and glutamine to IGP, AICAR and glutamate. The HisF subunit catalyzes the cyclization activity that produces IGP and AICAR from PRFAR using the ammonia provided by the HisH subunit. This Lactococcus lactis subsp. cremoris (strain SK11) protein is Imidazole glycerol phosphate synthase subunit HisF.